Here is a 309-residue protein sequence, read N- to C-terminus: DDRGK domain-containing protein 1 (309 aa).

The Lumenal segment spans residues Met1 to Asp2. A helical transmembrane segment spans residues Leu3–Leu23. Residues Gln24–Ser309 lie on the Cytoplasmic side of the membrane. The interval Thr30–Lys178 is disordered. Over residues Arg53–Asp84 the composition is skewed to low complexity. Acidic residues predominate over residues Ala85–Asp95. Basic and acidic residues predominate over residues Leu107–Lys178.

Belongs to the DDRGK1 family. In terms of assembly, interacts with Atg9; the interaction is transient.

The protein resides in the endoplasmic reticulum membrane. Its function is as follows. Substrate adapter for ufmylation, the covalent attachment of the ubiquitin-like modifier UFM1 to substrate proteins. Required for ufmylation of Atg9; protects the nervous system during aging, possibly by stabilizing Atg9 and supporting its function. The protein is DDRGK domain-containing protein 1 of Drosophila persimilis (Fruit fly).